A 276-amino-acid chain; its full sequence is Large ribosomal subunit protein uL2 (276 aa).

The disordered stretch occupies residues 224 to 276 (VMNPVDHPHGGGEGKAPIGRKSPMTPWGKPTLGYKTRKKKNKSDKFIIRRRKK). A compositionally biased stretch (basic residues) spans 258-276 (KTRKKKNKSDKFIIRRRKK).

Belongs to the universal ribosomal protein uL2 family. In terms of assembly, part of the 50S ribosomal subunit. Forms a bridge to the 30S subunit in the 70S ribosome.

In terms of biological role, one of the primary rRNA binding proteins. Required for association of the 30S and 50S subunits to form the 70S ribosome, for tRNA binding and peptide bond formation. It has been suggested to have peptidyltransferase activity; this is somewhat controversial. Makes several contacts with the 16S rRNA in the 70S ribosome. In Geobacillus thermodenitrificans (strain NG80-2), this protein is Large ribosomal subunit protein uL2.